Here is a 138-residue protein sequence, read N- to C-terminus: Large ribosomal subunit protein uL14 (138 aa).

Belongs to the universal ribosomal protein uL14 family. As to quaternary structure, part of the 50S ribosomal subunit. Forms a cluster with proteins L3 and L24e, part of which may contact the 16S rRNA in 2 intersubunit bridges.

Functionally, binds to 23S rRNA. Forms part of two intersubunit bridges in the 70S ribosome. The chain is Large ribosomal subunit protein uL14 from Metallosphaera sedula (strain ATCC 51363 / DSM 5348 / JCM 9185 / NBRC 15509 / TH2).